A 186-amino-acid chain; its full sequence is uncharacterized protein (186 aa).

The Macro domain occupies 1–181 (MVSFSYKGNL…TFVSLASDFL (181 aa)).

It belongs to the MacroD-type family.

This is an uncharacterized protein from Thermoplasma volcanium (strain ATCC 51530 / DSM 4299 / JCM 9571 / NBRC 15438 / GSS1).